Here is a 408-residue protein sequence, read N- to C-terminus: Aminoacylase-1 (408 aa).

A Zn(2+)-binding site is contributed by His76. Residue Asp78 is part of the active site. Position 109 (Asp109) interacts with Zn(2+). The Proton acceptor role is filled by Glu143. Zn(2+) contacts are provided by Glu144, Glu172, and His379.

This sequence belongs to the peptidase M20A family. In terms of assembly, homodimer. It depends on Zn(2+) as a cofactor.

It is found in the cytoplasm. It carries out the reaction an N-acyl-L-amino acid + H2O = an L-alpha-amino acid + a carboxylate. The catalysed reaction is an N-acetyl-L-cysteine-S-conjugate + H2O = an S-substituted L-cysteine + acetate. Its function is as follows. Involved in the hydrolysis of N-acylated or N-acetylated amino acids (except L-aspartate). In Dictyostelium discoideum (Social amoeba), this protein is Aminoacylase-1 (acy1).